Reading from the N-terminus, the 462-residue chain is Flavin-containing monooxygenase FMO GS-OX3 (462 aa).

Residue 17-22 (GAGPAG) coordinates FAD. An NADP(+)-binding site is contributed by 212-217 (GNFASG). Residues 318–338 (ALAPGLAFVGLPAMGIVFVMF) form a helical membrane-spanning segment.

This sequence belongs to the FMO family.

It localises to the membrane. It catalyses the reaction a (Z)-omega-(methylsulfanyl)-N-sulfo-alkylhydroximate S-glucoside + NADPH + O2 + H(+) = a (Z)-omega-(methylsulfinyl)-alkyl-glucosinolate + NADP(+) + H2O. In terms of biological role, catalyzes the conversion of methylthioalkyl glucosinolates of any chain length into methylsulfinylalkyl glucosinolates. Prefers probably short-chain methylthioalkyl glucosinolates in cv. Landsberg erecta. In Arabidopsis thaliana (Mouse-ear cress), this protein is Flavin-containing monooxygenase FMO GS-OX3 (FMOGS-OX3).